The sequence spans 718 residues: U-box domain-containing protein 5 (718 aa).

Residues Thr-218–Asp-292 form the U-box domain. ARM repeat units lie at residues Pro-493–Ser-532, Met-534–Ser-571, and Glu-573–Val-613. The disordered stretch occupies residues Lys-662 to Gly-704. The segment covering Thr-676–Thr-686 has biased composition (polar residues).

The enzyme catalyses S-ubiquitinyl-[E2 ubiquitin-conjugating enzyme]-L-cysteine + [acceptor protein]-L-lysine = [E2 ubiquitin-conjugating enzyme]-L-cysteine + N(6)-ubiquitinyl-[acceptor protein]-L-lysine.. It participates in protein modification; protein ubiquitination. Functionally, functions as an E3 ubiquitin ligase. The chain is U-box domain-containing protein 5 (PUB5) from Arabidopsis thaliana (Mouse-ear cress).